A 178-amino-acid polypeptide reads, in one-letter code: Large ribosomal subunit protein uL10 (178 aa).

It belongs to the universal ribosomal protein uL10 family. As to quaternary structure, part of the ribosomal stalk of the 50S ribosomal subunit. The N-terminus interacts with L11 and the large rRNA to form the base of the stalk. The C-terminus forms an elongated spine to which L12 dimers bind in a sequential fashion forming a multimeric L10(L12)X complex.

Forms part of the ribosomal stalk, playing a central role in the interaction of the ribosome with GTP-bound translation factors. The polypeptide is Large ribosomal subunit protein uL10 (Thermosynechococcus vestitus (strain NIES-2133 / IAM M-273 / BP-1)).